The following is a 793-amino-acid chain: Protein translocase subunit SecA 2 (793 aa).

ATP-binding positions include glutamine 77, 95–99 (GEGKT), and aspartate 493.

This sequence belongs to the SecA family. As to quaternary structure, monomer and homodimer. Part of the essential Sec protein translocation apparatus which comprises SecA, SecYEG and auxiliary proteins SecDF. Other proteins may also be involved.

The protein resides in the cell membrane. Its subcellular location is the cytoplasm. The catalysed reaction is ATP + H2O + cellular proteinSide 1 = ADP + phosphate + cellular proteinSide 2.. Part of the Sec protein translocase complex. Interacts with the SecYEG preprotein conducting channel. Has a central role in coupling the hydrolysis of ATP to the transfer of proteins into and across the cell membrane, serving as an ATP-driven molecular motor driving the stepwise translocation of polypeptide chains across the membrane. This Streptococcus sanguinis (strain SK36) protein is Protein translocase subunit SecA 2.